The following is a 177-amino-acid chain: Outer envelope pore protein 21, chloroplastic (177 aa).

The Cytoplasmic portion of the chain corresponds to 1-21 (METSLRYGGDSKALKIHAKEK). A beta stranded membrane pass occupies residues 22–31 (LRIDTNTFFQ). The Chloroplast intermembrane segment spans residues 32 to 55 (VRGGLDTKTGQPSSGSALIRHFYP). A beta stranded transmembrane segment spans residues 56-65 (NFSATLGVGV). Residues 66-81 (RYDKQDSVGVRYAKND) are Cytoplasmic-facing. The beta stranded transmembrane segment at 82-91 (KLRYTVLAKK) threads the bilayer. The Chloroplast intermembrane segment spans residues 92–97 (TFPVTN). A beta stranded membrane pass occupies residues 98-107 (DGLVNFKIKG). Topologically, residues 108–120 (GCDVDQDFKEWKS) are cytoplasmic. Residues 121–130 (RGGAEFSWNV) form a beta stranded membrane-spanning segment. Residues 131 to 137 (FNFQKDQ) are Chloroplast intermembrane-facing. A beta stranded membrane pass occupies residues 138 to 147 (DVRLRIGYEA). The Cytoplasmic portion of the chain corresponds to 148 to 152 (FEQVP). A beta stranded membrane pass occupies residues 153–162 (YLQIRENNWT). Topologically, residues 163–168 (FNADYK) are chloroplast intermembrane. A beta stranded transmembrane segment spans residues 169–177 (GRWNVRYDL).

The protein belongs to the plastid outer envelope porin OEP21 (TC 1.B.29) family. In terms of tissue distribution, present in roots, shoots and leaves.

The protein resides in the plastid. It is found in the etioplast membrane. Its subcellular location is the chloroplast outer membrane. Its function is as follows. Voltage-dependent rectifying anion channel that facilitates the translocation between chloroplast and cytoplasm of phosphorylated carbohydrates such as triosephosphate, 3-phosphoglycerate and inorganic phosphate (Pi) depending of ATP to triosephosphate ratio in the plastidial intermembrane space; in high triosephosphate/ATP conditions (e.g. photosynthesis), export of triosphosphate from chloroplast (outward rectifying channels), but in high ATP/triosephosphate conditions (e.g. dark phase), import of phosphosolutes (inward rectifying channels). This is Outer envelope pore protein 21, chloroplastic (OEP21) from Pisum sativum (Garden pea).